Here is a 1036-residue protein sequence, read N- to C-terminus: Histidine kinase 3 (1036 aa).

Residues 1 to 8 (MSLFHVLG) are Extracellular-facing. A helical transmembrane segment spans residues 9–29 (FGVKIGHLFWMLCCWFVSWFV). Topologically, residues 30 to 94 (DNGIEDKSGL…VKFNKAWWRK (65 aa)) are cytoplasmic. A helical membrane pass occupies residues 95–115 (LVVVWVVFWVLVSIWTFWYFS). Residues 116–399 (SQAMEKRKET…CRFKQKPPWP (284 aa)) are Extracellular-facing. In terms of domain architecture, CHASE spans 163–389 (IPSAIDQRTF…GDPLRKHEMR (227 aa)). Residues 400–420 (VLSMVTSFGILVIALLVAHII) form a helical membrane-spanning segment. The Cytoplasmic segment spans residues 421 to 1036 (HATVSRIHKV…FFNSPSDTES (616 aa)). Positions 457–723 (TVSHEIRTPM…TFTFTAVFSN (267 aa)) constitute a Histidine kinase domain. Position 460 is a phosphohistidine; by autocatalysis (H460). 2 consecutive Response regulatory domains span residues 746–865 (KAVV…QRGL) and 891–1028 (KILI…SRFF). D941 bears the 4-aspartylphosphate mark.

As to quaternary structure, interacts with AHK2, AHK4, AHP1, AHP2, AHP3, AHP5 and At5g43560. Autophosphorylated predominantly on His residues. Activation probably requires a transfer of a phosphate group between a His in the transmitter domain and an Asp of the receiver domain. As to expression, mostly expressed in leaves and flowers, and, to a lower extent, in roots, stems, and siliques, especially in the vascular tissues. Present in seedlings.

It localises to the cell membrane. It is found in the endoplasmic reticulum membrane. The enzyme catalyses ATP + protein L-histidine = ADP + protein N-phospho-L-histidine.. With respect to regulation, activated by cytokinins to initiate phosphorelay signaling. This cytokinin-mediated activation is repressed by the trans-zeatin antagonists 6-(2-hydroxy-3-methylbenzylamino)purine (PI-55) and 6-(2,5-Dihydroxybenzylamino)purine (LGR-991). Functionally, cytokinins (CK) receptor related to bacterial two-component regulators. Functions as a histidine kinase and transmits the stress signal to a downstream MAPK cascade. This protein undergoes an ATP-dependent autophosphorylation at a conserved histidine residue in the kinase core, and a phosphoryl group is then transferred to a conserved aspartate residue in the receiver domain. In the presence of cytokinin, feeds phosphate to phosphorelay-integrating histidine phosphotransfer protein (HPt) and activates subsequent cascade. Involved in meristems establishment in seedlings. Redundant negative regulator of drought and salt stress responses and abscisic acid (ABA) signaling. Together with AHK2, plays a negative regulatory role in cold stress signaling via inhibition of ABA response, occurring independently of the cold acclimation pathway. Redundant positive regulator of cytokinin signaling that regulates many developmental processes including seed germination, cell division, seed size, chlorophyll retention during leaf senescence, root repression and shoot promotion. Can interact with isoprenoid-type cytokinins trans-zeatin (tZ and tZR), cis-zeatin (cZ), dihydrozeatin (DZ), buta-2,3-dienyladenine (HA-8), penta-2,3-dienyladenine (HA-1), 4-methyl-penta-2,3-dienyladenine (HA-10), 4-hydroxy-2-butynyladenine (RM1), 2-propynyladenine (RM3), 2-butynyladenine (RM6), and cytokinin ribosides and ribotides. Together with AHK4, involved in the cytokinin-dependent responses to Pi starvation and sucrose stresses. Promotes cytokinin-mediated leaf longevity through a specific phosphorylation of the response regulator ARR2. Involved in alkamides (e.g. N-isobutyl decanamide) and N-acylethanolamides (NAE) signaling that control meristematic activity and differentiation processes during plant development. Contributes to vascular bundle formation and secondary growth in a cytokinin-dependent manner, probably by promoting the maintenance of mitotic activity and/or identity of procambial cells. Plays a role in the cytokinin-mediated repression of the iron uptake pathway. Required by the cytokinin-dependent flower development regulation pathway. In Arabidopsis thaliana (Mouse-ear cress), this protein is Histidine kinase 3 (AHK3).